A 94-amino-acid polypeptide reads, in one-letter code: MRNYEALIVFNMKGTETPVEELISTVAAAMKEEGADITATENAGRREFAYESNHLSAGQYVTYTFSAEPSAIRPIRERLRLNPQIHLQYYKVLG.

This sequence belongs to the bacterial ribosomal protein bS6 family.

Functionally, binds together with bS18 to 16S ribosomal RNA. The chain is Small ribosomal subunit protein bS6 from Akkermansia muciniphila (strain ATCC BAA-835 / DSM 22959 / JCM 33894 / BCRC 81048 / CCUG 64013 / CIP 107961 / Muc).